Reading from the N-terminus, the 1073-residue chain is Serine/threonine-protein phosphatase 6 regulatory ankyrin repeat subunit C (1073 aa).

ANK repeat units lie at residues 7–36 (TDQP…NINV), 40–69 (ERRT…NVNA), 73–102 (VWLT…DVNA), 106–135 (YWQT…TVNV), 139–168 (TGRT…SLST), 172–201 (KDRQ…DVMC), 205–234 (KGYT…EIDE), 238–267 (FGNT…NVNQ), 271–301 (KGFT…DVNF), 305–334 (EGKS…EIDC), 338–367 (YGNT…DTAR), 371–400 (HDMF…LYSI), 422–451 (LGRT…DLRR), 455–484 (FGRT…SINE), 488–544 (KGCT…DPSL), 548–578 (QGYT…CLED), 583–612 (IPVS…NLDV), 616–645 (KGRT…SALV), 650–679 (RKWT…RADI), 686–715 (HGQT…TADA), 719–748 (RGRT…FVLC), 752–781 (KGRT…STDP), 789–818 (SGYS…FAYL), 821–851 (NPFT…KIVN), 856–885 (KGRT…EVDT), 889–919 (LGRT…NITV), 923–952 (NKNT…DLGL), and 959–988 (ALQM…TVLA).

In terms of assembly, protein phosphatase 6 (PP6) holoenzyme is proposed to be a heterotrimeric complex formed by the catalytic subunit, a SAPS domain-containing subunit (PP6R) and an ankyrin repeat-domain containing regulatory subunit (ARS).

Putative regulatory subunit of protein phosphatase 6 (PP6) that may be involved in the recognition of phosphoprotein substrates. The sequence is that of Serine/threonine-protein phosphatase 6 regulatory ankyrin repeat subunit C (ANKRD52) from Gallus gallus (Chicken).